The following is a 220-amino-acid chain: Adenylate kinase (220 aa).

Residue 10–15 coordinates ATP; sequence GAGKGT. The interval 30-59 is NMP; sequence STGDMLRAAVKAGSPLGVEAKGYMDAGKLV. Residues Thr31, Arg36, 57–59, 85–88, and Gln92 contribute to the AMP site; these read KLV and GFPR. The tract at residues 122 to 150 is disordered; sequence GRRTHPASGRTYHVKFNPPKVEGKDDVTG. Positions 122 to 159 are LID; the sequence is GRRTHPASGRTYHVKFNPPKVEGKDDVTGEPLIQRDDD. Residues Arg123 and 132–133 contribute to the ATP site; that span reads TY. AMP is bound by residues Arg156 and Arg167. Gly206 is a binding site for ATP.

The protein belongs to the adenylate kinase family. Monomer.

It is found in the cytoplasm. The enzyme catalyses AMP + ATP = 2 ADP. It participates in purine metabolism; AMP biosynthesis via salvage pathway; AMP from ADP: step 1/1. In terms of biological role, catalyzes the reversible transfer of the terminal phosphate group between ATP and AMP. Plays an important role in cellular energy homeostasis and in adenine nucleotide metabolism. This chain is Adenylate kinase, found in Burkholderia ambifaria (strain MC40-6).